The sequence spans 290 residues: Carbonic anhydrase-related protein (290 aa).

Residues 1 to 26 form a disordered region; that stretch reads MADLSFIEDTVAFPEKEEDEEEEEEG. The residue at position 5 (serine 5) is a Phosphoserine. A compositionally biased stretch (acidic residues) spans 16 to 26; sequence KEEDEEEEEEG. In terms of domain architecture, Alpha-carbonic anhydrase spans 27-289; the sequence is VEWGYEEGVE…LSDRVIRAAF (263 aa). The Proton donor/acceptor role is filled by histidine 87. Zn(2+) contacts are provided by histidine 118 and histidine 141.

Belongs to the alpha-carbonic anhydrase family.

Does not have a carbonic anhydrase catalytic activity. The polypeptide is Carbonic anhydrase-related protein (CA8) (Homo sapiens (Human)).